The primary structure comprises 302 residues: Merozoite surface protein 2 (302 aa).

The N-terminal stretch at 1 to 20 (MKVIKTLSIINFFIFVTFNI) is a signal peptide. 2 N-linked (GlcNAc...) asparagine glycosylation sites follow: N22 and N36. Residues 44-228 (EESKPPTGAV…EQTESPELQS (185 aa)) are polymorphic region. The stretch at 55 to 60 (GSGAGA) is one 1; partial repeat. An 8 X 8 AA tandem repeats of G-S-G-A-G-A-V-A region spans residues 55–113 (GSGAGAGSGAGAVAGSGAGAVAGSGAGAVAGSGAGAVAGSGAGAVAGSGAGAVAGSGAG). A run of 6 repeats spans residues 61-68 (GSGAGAVA), 69-76 (GSGAGAVA), 77-84 (GSGAGAVA), 85-92 (GSGAGAVA), 93-100 (GSGAGAVA), and 101-108 (GSGAGAVA). The 8; partial repeat unit spans residues 109–113 (GSGAG). Residues 114-263 (NGANPGADAE…DSQKECTDGN (150 aa)) are disordered. The segment covering 125-150 (SPSTPATTTTTTTTNDAEASTSTSSE) has biased composition (low complexity). Basic and acidic residues predominate over residues 151–167 (NRNHNNAETNPKGKGEV). Composition is skewed to polar residues over residues 169-195 (KPNQ…NVPR) and 202-230 (KSPT…QSAP). Residue N179 is glycosylated (N-linked (GlcNAc...) asparagine). The N-linked (GlcNAc...) asparagine glycan is linked to N251. The cysteines at positions 259 and 267 are disulfide-linked. Residues N275 and N276 are each glycosylated (N-linked (GlcNAc...) asparagine). The GPI-anchor amidated asparagine moiety is linked to residue N276. Positions 277–302 (SSNIASINKFVVLISATLVLSFAIFI) are cleaved as a propeptide — removed in mature form.

The protein localises to the cell membrane. Functionally, may play a role in the merozoite attachment to the erythrocyte. This Plasmodium falciparum (isolate tak 9) protein is Merozoite surface protein 2.